The following is a 457-amino-acid chain: Cytochrome b-c1 complex subunit 1, mitochondrial (457 aa).

A mitochondrion-targeting transit peptide spans 1 to 26 (MLRTVTSKTVSNQFKRSLATAVATPK).

The protein belongs to the peptidase M16 family. UQCRC1/QCR1 subfamily. As to quaternary structure, component of the ubiquinol-cytochrome c oxidoreductase (cytochrome b-c1 complex, complex III, CIII), a multisubunit enzyme composed of 10 subunits. The complex is composed of 3 respiratory subunits cytochrome b (COB), cytochrome c1 (CYT1) and Rieske protein (RIP1), 2 core protein subunits COR1 and QCR2, and 5 low-molecular weight protein subunits QCR6, QCR7, QCR8, QCR9 and QCR10. The complex exists as an obligatory dimer and forms supercomplexes (SCs) in the inner mitochondrial membrane with a monomer or a dimer of cytochrome c oxidase (complex IV, CIV), resulting in 2 different assemblies (supercomplexes III(2)IV and III(2)IV(2)). COR1 interacts with COX5A at the CIII-CIV interface.

The protein localises to the mitochondrion inner membrane. In terms of biological role, component of the ubiquinol-cytochrome c oxidoreductase, a multisubunit transmembrane complex that is part of the mitochondrial electron transport chain which drives oxidative phosphorylation. The respiratory chain contains 3 multisubunit complexes succinate dehydrogenase (complex II, CII), ubiquinol-cytochrome c oxidoreductase (cytochrome b-c1 complex, complex III, CIII) and cytochrome c oxidase (complex IV, CIV), that cooperate to transfer electrons derived from NADH and succinate to molecular oxygen, creating an electrochemical gradient over the inner membrane that drives transmembrane transport and the ATP synthase. The cytochrome b-c1 complex catalyzes electron transfer from ubiquinol to cytochrome c, linking this redox reaction to translocation of protons across the mitochondrial inner membrane, with protons being carried across the membrane as hydrogens on the quinol. In the process called Q cycle, 2 protons are consumed from the matrix, 4 protons are released into the intermembrane space and 2 electrons are passed to cytochrome c. This is Cytochrome b-c1 complex subunit 1, mitochondrial (COR1) from Saccharomyces cerevisiae (strain ATCC 204508 / S288c) (Baker's yeast).